Here is a 469-residue protein sequence, read N- to C-terminus: Adenosylhomocysteinase (469 aa).

Thr-63, Asp-139, and Glu-164 together coordinate substrate. Residue 165–167 (TTT) participates in NAD(+) binding. Substrate contacts are provided by Lys-194 and Asp-198. NAD(+) is bound by residues Asn-199, 228-233 (GYGDVG), Glu-251, Asn-300, 321-323 (IGH), and Asn-375.

Belongs to the adenosylhomocysteinase family. The cofactor is NAD(+).

The protein localises to the cytoplasm. It catalyses the reaction S-adenosyl-L-homocysteine + H2O = L-homocysteine + adenosine. It participates in amino-acid biosynthesis; L-homocysteine biosynthesis; L-homocysteine from S-adenosyl-L-homocysteine: step 1/1. Its function is as follows. May play a key role in the regulation of the intracellular concentration of adenosylhomocysteine. The chain is Adenosylhomocysteinase from Pseudomonas fluorescens (strain Pf0-1).